A 203-amino-acid chain; its full sequence is RNA annealing protein YRA2 (203 aa).

Met1 carries the N-acetylmethionine modification. Disordered regions lie at residues 1 to 60 (MDKA…REEP) and 137 to 203 (QPQR…YMKG). Polar residues predominate over residues 11 to 20 (NSHTDSSSNH). Residues 47-60 (SRSKDRLYREREEP) show a composition bias toward basic and acidic residues. Residues 64-138 (KRIRISKIPL…AKIEVEIYQP (75 aa)) form the RRM domain. Residues 139–153 (QRKHSRMNAHNRRKQ) show a composition bias toward basic residues. A compositionally biased stretch (basic and acidic residues) spans 154-164 (TAQEHGRDRPG). Residues 165-180 (SHYRQKPNRVSKKNKG) show a composition bias toward basic residues.

This sequence belongs to the YRA1 family. Associates with mRNPs. Interacts with YRA1.

It localises to the nucleus. In terms of biological role, involved in export of poly(A) mRNAs from the nucleus. Recruited to the coding sequences as well as poly-A sites of active genes. In Saccharomyces cerevisiae (strain YJM789) (Baker's yeast), this protein is RNA annealing protein YRA2 (YRA2).